Here is a 392-residue protein sequence, read N- to C-terminus: MSFLTLKDVDLKDKKVLVRVDFNVPVKDGKVTSKVRIEAAIPTIQYILDQGGAVILMSHLGRPTEGEYDSQFSLEPVAKALSEIINKPVKFAKDWLDGVDVKAGEIVMCENVRFNSGEKKSTDDLSKKIASLGDVFVMDAFATAHRAQASTYGVAKYIPVACAGILLTNEIQALEKALKSPKKPMAAIVGGSKVSTKLSVLNNLLDKVEILIVGGGIANTFIKAEGFDVGNSLYEQDLVAEATEILAKAKALGVNIPVPVDVRVAKEFSENAQAIIKKVSDVAADEMILDIGPESEKRIAELLKSANTILWNGPVGVFEFDNFAEGTKALSLSIAQSHAFSVAGGGDTIAAIEKFGIKDQVSYISTAGGAFLEFLEGKKLPAIEILKEKAIR.

Substrate contacts are provided by residues 21–23 (DFN), arginine 36, 59–62 (HLGR), arginine 113, and arginine 146. ATP is bound by residues lysine 197, glutamate 319, and 345–348 (GGDT).

The protein belongs to the phosphoglycerate kinase family. As to quaternary structure, monomer.

The protein localises to the cytoplasm. The catalysed reaction is (2R)-3-phosphoglycerate + ATP = (2R)-3-phospho-glyceroyl phosphate + ADP. It participates in carbohydrate degradation; glycolysis; pyruvate from D-glyceraldehyde 3-phosphate: step 2/5. This chain is Phosphoglycerate kinase, found in Francisella tularensis subsp. novicida (strain U112).